The sequence spans 338 residues: Inositol 2-dehydrogenase (338 aa).

The protein belongs to the Gfo/Idh/MocA family. Homotetramer.

The enzyme catalyses myo-inositol + NAD(+) = scyllo-inosose + NADH + H(+). Involved in the oxidation of myo-inositol (MI) to 2-keto-myo-inositol (2KMI or 2-inosose). The protein is Inositol 2-dehydrogenase of Azotobacter vinelandii (strain DJ / ATCC BAA-1303).